A 180-amino-acid polypeptide reads, in one-letter code: Large ribosomal subunit protein uL6 (180 aa).

Belongs to the universal ribosomal protein uL6 family. In terms of assembly, part of the 50S ribosomal subunit.

This protein binds to the 23S rRNA, and is important in its secondary structure. It is located near the subunit interface in the base of the L7/L12 stalk, and near the tRNA binding site of the peptidyltransferase center. The chain is Large ribosomal subunit protein uL6 from Anaeromyxobacter sp. (strain Fw109-5).